Here is a 154-residue protein sequence, read N- to C-terminus: 17 kDa surface antigen (154 aa).

A signal peptide spans 1 to 19; the sequence is MKLLSKIMIIALAASTLQA. Cys20 carries N-palmitoyl cysteine lipidation. The S-diacylglycerol cysteine moiety is linked to residue Cys20.

The protein belongs to the rickettsiale 17 kDa surface antigen family.

Its subcellular location is the cell outer membrane. In Rickettsia amblyommatis (Rickettsia amblyommii), this protein is 17 kDa surface antigen (omp).